We begin with the raw amino-acid sequence, 311 residues long: Mycothiol acetyltransferase (311 aa).

Residue glutamate 35 coordinates 1D-myo-inositol 2-(L-cysteinylamino)-2-deoxy-alpha-D-glucopyranoside. 79–81 (LVV) is a binding site for acetyl-CoA. Residues 155 to 311 (VRTYVGTVDD…TAYALARIDD (157 aa)) enclose the N-acetyltransferase domain. 1D-myo-inositol 2-(L-cysteinylamino)-2-deoxy-alpha-D-glucopyranoside-binding residues include glutamate 180, lysine 225, and glutamate 235. Acetyl-CoA contacts are provided by residues 239–241 (LGV) and 246–252 (QGRGLGQ). Residue tyrosine 278 participates in 1D-myo-inositol 2-(L-cysteinylamino)-2-deoxy-alpha-D-glucopyranoside binding. 283-288 (NVAAAR) contributes to the acetyl-CoA binding site.

This sequence belongs to the acetyltransferase family. MshD subfamily. In terms of assembly, monomer.

It catalyses the reaction 1D-myo-inositol 2-(L-cysteinylamino)-2-deoxy-alpha-D-glucopyranoside + acetyl-CoA = mycothiol + CoA + H(+). In terms of biological role, catalyzes the transfer of acetyl from acetyl-CoA to desacetylmycothiol (Cys-GlcN-Ins) to form mycothiol. This Mycobacterium leprae (strain Br4923) protein is Mycothiol acetyltransferase.